Reading from the N-terminus, the 734-residue chain is MASRFPKFSQGLSQDPTTRRIWFGIATAHDFESHDDMTEERLYQKIFASHFGQLAVIFLWTSGNLFHVAWQGNFEAWGQDPLHVRPIAHAIWDPHFGQPAVEAYTRGGASGPVNIAYSGVYQWWYTIGLRTNQDLYTGALFLLALSALFLIAGWLHLQPKWKPGLSWFKNAESRLNHHLSGLFGVSSLAWTGHLVHVAIPESRGEHVRWDNLLTALPHPQGLGPFLSGQWSVYAQNPDSTNHLFGTSQGAGTGILTFLGGFHPQTQSLWLTDIAHHHLAIAVVFIIAGHMYRTNFGIGHSIKEILEAHTPPGGRLGRGHKGLYDTINNSLHFQLGLALAALGVITSLVAQHMYSLPAYAFIAQDFTTQAALYTHHQYIAGFIMTGAFAHGAIFFIRDYNPEQNRDNVLARMLEHKEAIISHLSWASLFLGFHTLGLYVHNDVMLAFGTPEKQILIEPVFAQWIQSTHGKALYGFDVLLSSADSPAFTAGQSLWLPGWLDAINNNSNSLFLTIGPGDFLVHHAIALGLHTTTSIPVKGALDARGSKLMPDKKEFGYSFPCDGPGRGGTCDISAWDAFYLSVFWMLNTIGWVTFYWHWKHITLWQGNVAQFDESSTYLMGWLRDYLWLNSSQLINGYNPFGMNSLSVWAWMFLFGHLVWAIGFMFLISWRGYWQELIETLAWAHERTPLANLVRWKDKPVALSIVQARLVGLAHFSVGYIFTYAAFLIASTSGKFG.

Helical transmembrane passes span 46–69 (IFAS…FHVA), 135–158 (LYTG…LHLQ), 175–199 (LNHH…HVAI), 273–291 (IAHH…GHMY), 330–353 (LHFQ…QHMY), 369–395 (AALY…IFFI), 417–439 (AIIS…LYVH), and 517–535 (FLVH…SIPV). [4Fe-4S] cluster-binding residues include cysteine 559 and cysteine 568. 2 helical membrane passes run 575 to 596 (AFYL…YWHW) and 643 to 665 (LSVW…MFLI). Residues histidine 654, methionine 662, and tyrosine 670 each coordinate chlorophyll a. Tryptophan 671 contacts phylloquinone. Residues 707-727 (LVGLAHFSVGYIFTYAAFLIA) form a helical membrane-spanning segment.

It belongs to the PsaA/PsaB family. As to quaternary structure, the PsaA/B heterodimer binds the P700 chlorophyll special pair and subsequent electron acceptors. PSI consists of a core antenna complex that captures photons, and an electron transfer chain that converts photonic excitation into a charge separation. The eukaryotic PSI reaction center is composed of at least 11 subunits. It depends on P700 is a chlorophyll a/chlorophyll a' dimer, A0 is one or more chlorophyll a, A1 is one or both phylloquinones and FX is a shared 4Fe-4S iron-sulfur center. as a cofactor.

The protein localises to the plastid. The protein resides in the chloroplast thylakoid membrane. The catalysed reaction is reduced [plastocyanin] + hnu + oxidized [2Fe-2S]-[ferredoxin] = oxidized [plastocyanin] + reduced [2Fe-2S]-[ferredoxin]. PsaA and PsaB bind P700, the primary electron donor of photosystem I (PSI), as well as the electron acceptors A0, A1 and FX. PSI is a plastocyanin-ferredoxin oxidoreductase, converting photonic excitation into a charge separation, which transfers an electron from the donor P700 chlorophyll pair to the spectroscopically characterized acceptors A0, A1, FX, FA and FB in turn. Oxidized P700 is reduced on the lumenal side of the thylakoid membrane by plastocyanin. In Angiopteris evecta (Mule's foot fern), this protein is Photosystem I P700 chlorophyll a apoprotein A2.